The following is a 206-amino-acid chain: Large ribosomal subunit protein uL3 (206 aa).

Belongs to the universal ribosomal protein uL3 family. In terms of assembly, part of the 50S ribosomal subunit. Forms a cluster with proteins L14 and L19.

Its function is as follows. One of the primary rRNA binding proteins, it binds directly near the 3'-end of the 23S rRNA, where it nucleates assembly of the 50S subunit. The polypeptide is Large ribosomal subunit protein uL3 (Cytophaga hutchinsonii (strain ATCC 33406 / DSM 1761 / CIP 103989 / NBRC 15051 / NCIMB 9469 / D465)).